The following is a 215-amino-acid chain: Vesicle transport protein SFT2C (215 aa).

Residues 1-82 (MADLHRQLQE…RGQRLAAGGG (82 aa)) lie on the Cytoplasmic side of the membrane. Residues 83 to 103 (CLLLAALCFGLAALYAPVLLL) form a helical membrane-spanning segment. Residues 104-107 (RARK) lie on the Lumenal side of the membrane. Residues 108–128 (FALLWSLGSALALAGSALLRG) traverse the membrane as a helical segment. Residues 129–142 (GAACGRLLRCEEAP) are Cytoplasmic-facing. Residues 143–163 (SRPALLYMAALGATLFAALGL) form a helical membrane-spanning segment. The Lumenal segment spans residues 164 to 166 (RST). Residues 167–187 (LLTVLGAGAQVAALLAALVGL) traverse the membrane as a helical segment. Over 188-215 (LPWGGGTALRLALGRLGRGAGLAKVLPV) the chain is Cytoplasmic.

The protein belongs to the SFT2 family.

Its subcellular location is the membrane. Functionally, may be involved in fusion of retrograde transport vesicles derived from an endocytic compartment with the Golgi complex. In Homo sapiens (Human), this protein is Vesicle transport protein SFT2C.